The chain runs to 85 residues: Transcriptional repressor protein KorC (85 aa).

A DNA-binding region (H-T-H motif) is located at residues 28–47 (VLHLAGLTGGQAARILGLGA).

Acts with KorA as corepressor in the control of the kilC and kilE operons. This is Transcriptional repressor protein KorC (korC) from Escherichia coli.